The following is a 498-amino-acid chain: Glycerol kinase (498 aa).

Position 12 (threonine 12) interacts with ADP. ATP contacts are provided by threonine 12, threonine 13, and serine 14. Position 12 (threonine 12) interacts with sn-glycerol 3-phosphate. Arginine 16 is a binding site for ADP. Sn-glycerol 3-phosphate contacts are provided by arginine 82, glutamate 83, tyrosine 134, and aspartate 243. Residues arginine 82, glutamate 83, tyrosine 134, aspartate 243, and glutamine 244 each contribute to the glycerol site. Residues threonine 265 and glycine 308 each coordinate ADP. Residues threonine 265, glycine 308, glutamine 312, and glycine 411 each contribute to the ATP site. An ADP-binding site is contributed by glycine 411.

This sequence belongs to the FGGY kinase family.

The catalysed reaction is glycerol + ATP = sn-glycerol 3-phosphate + ADP + H(+). It functions in the pathway polyol metabolism; glycerol degradation via glycerol kinase pathway; sn-glycerol 3-phosphate from glycerol: step 1/1. Its activity is regulated as follows. Inhibited by fructose 1,6-bisphosphate (FBP). Functionally, key enzyme in the regulation of glycerol uptake and metabolism. Catalyzes the phosphorylation of glycerol to yield sn-glycerol 3-phosphate. The chain is Glycerol kinase from Brucella canis (strain ATCC 23365 / NCTC 10854 / RM-666).